The chain runs to 87 residues: Spore morphogenesis and germination protein YwcE (87 aa).

3 consecutive transmembrane segments (helical) span residues 1–21 (MMDM…FIWL), 26–46 (VALS…FYAT), and 56–76 (LMII…FIIY).

This sequence belongs to the YwcE family.

It localises to the cell membrane. It is found in the spore membrane. The protein resides in the spore outer membrane. Required for proper spore morphogenesis. Important for spore germination. In Bacillus subtilis (strain 168), this protein is Spore morphogenesis and germination protein YwcE (ywcE).